The sequence spans 635 residues: Early transcription factor 70 kDa subunit (635 aa).

The region spanning 32–185 (RSIIDENKSV…SNIISLMSDE (154 aa)) is the Helicase ATP-binding domain. 45–52 (HIMGSGKT) serves as a coordination point for ATP. The DEXH box motif lies at 135–138 (DEAH). Positions 326–505 (KFKYFIGKIT…TLPFDIKKLL (180 aa)) constitute a Helicase C-terminal domain.

The protein belongs to the helicase family. VETF subfamily. In terms of assembly, heterodimer of a 70 kDa and a 82 kDa subunit.

The protein resides in the virion. In terms of biological role, acts with RNA polymerase to initiate transcription from early gene promoters. A DNA-dependent ATPase activity is associated with VETF. The sequence is that of Early transcription factor 70 kDa subunit (VETFS) from Erythrocebus patas (Red guenon).